The following is a 151-amino-acid chain: Deoxyuridine 5'-triphosphate nucleotidohydrolase (151 aa).

Substrate contacts are provided by residues 70–72 (RSG), asparagine 83, 87–89 (LID), and methionine 97.

It belongs to the dUTPase family. It depends on Mg(2+) as a cofactor.

It carries out the reaction dUTP + H2O = dUMP + diphosphate + H(+). The protein operates within pyrimidine metabolism; dUMP biosynthesis; dUMP from dCTP (dUTP route): step 2/2. Functionally, this enzyme is involved in nucleotide metabolism: it produces dUMP, the immediate precursor of thymidine nucleotides and it decreases the intracellular concentration of dUTP so that uracil cannot be incorporated into DNA. This chain is Deoxyuridine 5'-triphosphate nucleotidohydrolase, found in Yersinia enterocolitica serotype O:8 / biotype 1B (strain NCTC 13174 / 8081).